A 410-amino-acid polypeptide reads, in one-letter code: Neuroserpin (410 aa).

The signal sequence occupies residues 1–16 (MAFLGLFSLLVLQSMA). N-linked (GlcNAc...) asparagine glycans are attached at residues Asn-157, Asn-321, and Asn-401. An O-linked (Xyl...) (chondroitin sulfate) serine glycan is attached at Ser-403.

Belongs to the serpin family. As to quaternary structure, monomer. Has a tendency to form large polymers already at 41 and 45 degrees Celsius (in vitro). In terms of tissue distribution, detected in brain cortex and hippocampus pyramidal neurons (at protein level). Detected in cerebrospinal fluid (at protein level). Predominantly expressed in the brain.

Its subcellular location is the secreted. The protein resides in the cytoplasmic vesicle. The protein localises to the secretory vesicle lumen. It localises to the perikaryon. Functionally, serine protease inhibitor that inhibits plasminogen activators and plasmin but not thrombin. May be involved in the formation or reorganization of synaptic connections as well as for synaptic plasticity in the adult nervous system. May protect neurons from cell damage by tissue-type plasminogen activator. The sequence is that of Neuroserpin (SERPINI1) from Homo sapiens (Human).